Here is a 234-residue protein sequence, read N- to C-terminus: Large ribosomal subunit protein uL1 (234 aa).

It belongs to the universal ribosomal protein uL1 family. In terms of assembly, part of the 50S ribosomal subunit.

Functionally, binds directly to 23S rRNA. The L1 stalk is quite mobile in the ribosome, and is involved in E site tRNA release. Protein L1 is also a translational repressor protein, it controls the translation of the L11 operon by binding to its mRNA. The protein is Large ribosomal subunit protein uL1 of Maridesulfovibrio salexigens (strain ATCC 14822 / DSM 2638 / NCIMB 8403 / VKM B-1763) (Desulfovibrio salexigens).